Here is a 466-residue protein sequence, read N- to C-terminus: Neuraminidase (466 aa).

Topologically, residues 1-8 are intravirion; sequence MLPSTVQT. The helical transmembrane segment at 9 to 31 threads the bilayer; sequence LTLLLTSGGVLLSLYVSASLSYL. An involved in apical transport and lipid raft association region spans residues 13–35; that stretch reads LTSGGVLLSLYVSASLSYLLYSD. Over 32-466 the chain is Virion surface; that stretch reads LYSDVLLKFS…DTVTGVDMAL (435 aa). Residues 38–86 are hypervariable stalk region; it reads LKFSSTKTTAPTMSLECTNASNAQTVNHSATKEMTFPPPEPEWTYPRLS. Residues Asn-56 and Asn-64 are each glycosylated (N-linked (GlcNAc...) asparagine; by host). 8 disulfide bridges follow: Cys-87–Cys-420, Cys-122–Cys-127, Cys-182–Cys-229, Cys-231–Cys-236, Cys-277–Cys-291, Cys-279–Cys-289, Cys-318–Cys-337, and Cys-424–Cys-447. Residues 89 to 466 form a head of neuraminidase region; sequence GSTFQKALLI…DTVTGVDMAL (378 aa). Substrate is bound at residue Arg-116. Residue Asn-144 is glycosylated (N-linked (GlcNAc...) asparagine; by host). Asp-149 (proton donor/acceptor) is an active-site residue. Arg-150 contacts substrate. 275–276 serves as a coordination point for substrate; it reads EE. The N-linked (GlcNAc...) asparagine; by host glycan is linked to Asn-284. Position 292 (Arg-292) interacts with substrate. 4 residues coordinate Ca(2+): Asp-293, Thr-297, Asp-324, and Gly-346. Arg-374 contacts substrate. Tyr-409 functions as the Nucleophile in the catalytic mechanism.

It belongs to the glycosyl hydrolase 34 family. In terms of assembly, homotetramer. The cofactor is Ca(2+). Post-translationally, N-glycosylated.

Its subcellular location is the virion membrane. It localises to the host apical cell membrane. The enzyme catalyses Hydrolysis of alpha-(2-&gt;3)-, alpha-(2-&gt;6)-, alpha-(2-&gt;8)- glycosidic linkages of terminal sialic acid residues in oligosaccharides, glycoproteins, glycolipids, colominic acid and synthetic substrates.. Inhibited by the neuraminidase inhibitors zanamivir (Relenza) and oseltamivir (Tamiflu). These drugs interfere with the release of progeny virus from infected cells and are effective against all influenza strains. Resistance to neuraminidase inhibitors is quite rare. Its function is as follows. Catalyzes the removal of terminal sialic acid residues from viral and cellular glycoconjugates. Cleaves off the terminal sialic acids on the glycosylated HA during virus budding to facilitate virus release. Additionally helps virus spread through the circulation by further removing sialic acids from the cell surface. These cleavages prevent self-aggregation and ensure the efficient spread of the progeny virus from cell to cell. Otherwise, infection would be limited to one round of replication. Described as a receptor-destroying enzyme because it cleaves a terminal sialic acid from the cellular receptors. May facilitate viral invasion of the upper airways by cleaving the sialic acid moieties on the mucin of the airway epithelial cells. Likely to plays a role in the budding process through its association with lipid rafts during intracellular transport. May additionally display a raft-association independent effect on budding. Plays a role in the determination of host range restriction on replication and virulence. Sialidase activity in late endosome/lysosome traffic seems to enhance virus replication. This is Neuraminidase from Influenza B virus (strain B/Lee/1940).